The primary structure comprises 159 residues: Cyclic pyranopterin monophosphate synthase (159 aa).

Substrate-binding positions include 75–77 (LCH) and 113–114 (ME). The active site involves D128.

This sequence belongs to the MoaC family. Homohexamer; trimer of dimers.

The enzyme catalyses (8S)-3',8-cyclo-7,8-dihydroguanosine 5'-triphosphate = cyclic pyranopterin phosphate + diphosphate. It functions in the pathway cofactor biosynthesis; molybdopterin biosynthesis. Catalyzes the conversion of (8S)-3',8-cyclo-7,8-dihydroguanosine 5'-triphosphate to cyclic pyranopterin monophosphate (cPMP). The protein is Cyclic pyranopterin monophosphate synthase of Burkholderia multivorans (strain ATCC 17616 / 249).